A 1219-amino-acid chain; its full sequence is Type IV pilus biogenesis factor PilY1 homolog PD_0502 (1219 aa).

Positions 1 to 35 (MVGMSRIILNNLFFFRCVVAVFSAHSLVISGAVHA) are cleaved as a signal peptide. Positions 212–234 (GLSTDPLNTEGQPYDPSRHPLNS) are disordered. Residues Gln-958, Asn-960, Ile-962, and Asp-964 each contribute to the Ca(2+) site.

The protein belongs to the PilY1 family.

The protein localises to the fimbrium. In terms of biological role, one of the three PilY1 homologs of X.fastidiosa, which are involved in bacterial twitching motility as component of the filamentous type IV pili (T4P). The polypeptide is Type IV pilus biogenesis factor PilY1 homolog PD_0502 (Xylella fastidiosa (strain Temecula1 / ATCC 700964)).